The chain runs to 404 residues: Cysteine desulfurase IscS (404 aa).

Residues 75–76, asparagine 155, glutamine 183, and 203–205 each bind pyridoxal 5'-phosphate; these read AT and SAH. Position 206 is an N6-(pyridoxal phosphate)lysine (lysine 206). Pyridoxal 5'-phosphate is bound at residue threonine 243. Cysteine 328 acts as the Cysteine persulfide intermediate in catalysis. [2Fe-2S] cluster is bound at residue cysteine 328.

It belongs to the class-V pyridoxal-phosphate-dependent aminotransferase family. NifS/IscS subfamily. Homodimer. Forms a heterotetramer with IscU, interacts with other sulfur acceptors. Pyridoxal 5'-phosphate serves as cofactor.

It localises to the cytoplasm. The catalysed reaction is (sulfur carrier)-H + L-cysteine = (sulfur carrier)-SH + L-alanine. It participates in cofactor biosynthesis; iron-sulfur cluster biosynthesis. Master enzyme that delivers sulfur to a number of partners involved in Fe-S cluster assembly, tRNA modification or cofactor biosynthesis. Catalyzes the removal of elemental sulfur atoms from cysteine to produce alanine. Functions as a sulfur delivery protein for Fe-S cluster synthesis onto IscU, an Fe-S scaffold assembly protein, as well as other S acceptor proteins. The chain is Cysteine desulfurase IscS from Pseudomonas aeruginosa (strain UCBPP-PA14).